The chain runs to 312 residues: Homoserine O-succinyltransferase (312 aa).

Residue C142 is the Acyl-thioester intermediate of the active site. Substrate contacts are provided by K163 and S192. H235 serves as the catalytic Proton acceptor. E237 is a catalytic residue. R249 lines the substrate pocket.

The protein belongs to the MetA family.

The protein localises to the cytoplasm. The catalysed reaction is L-homoserine + succinyl-CoA = O-succinyl-L-homoserine + CoA. It functions in the pathway amino-acid biosynthesis; L-methionine biosynthesis via de novo pathway; O-succinyl-L-homoserine from L-homoserine: step 1/1. Its function is as follows. Transfers a succinyl group from succinyl-CoA to L-homoserine, forming succinyl-L-homoserine. The sequence is that of Homoserine O-succinyltransferase from Aliivibrio salmonicida (strain LFI1238) (Vibrio salmonicida (strain LFI1238)).